Consider the following 243-residue polypeptide: Bidirectional sugar transporter SWEET2a (243 aa).

An N-terminal signal peptide occupies residues 1–15 (MMNALGLSVAATSTG). The Extracellular segment spans residues 16-24 (SPFHDVCCY). A helical membrane pass occupies residues 25–45 (GAGIAGNIFALVLFISPLPTF). Residues 27-112 (GIAGNIFALV…ATFIAFADAK (86 aa)) form the MtN3/slv 1 domain. At 46–56 (KRIVRNGSTEQ) the chain is on the cytoplasmic side. The helical transmembrane segment at 57–79 (FSAMPYIYSLLNCLICLWYGLPF) threads the bilayer. Residues 80–90 (VSYGVVLVATV) lie on the Extracellular side of the membrane. Residues 91 to 111 (NSIGALFQLAYTATFIAFADA) traverse the membrane as a helical segment. Topologically, residues 112–118 (KNRVKVS) are cytoplasmic. Residues 119-139 (SLLVMVFGVFALIVYVSLALF) traverse the membrane as a helical segment. Topologically, residues 140–146 (DHQTRQL) are extracellular. The chain crosses the membrane as a helical span at residues 147–167 (FVGYLSVASLIFMFASPLSII). Residues 147–229 (FVGYLSVASL…QLVLYGYFRK (83 aa)) enclose the MtN3/slv 2 domain. The Cytoplasmic segment spans residues 168-180 (NLVIRTKSVEYMP). A helical transmembrane segment spans residues 181–201 (FYLSLSMFLMSVSFFAYGVLL). Residues 202 to 203 (HD) lie on the Extracellular side of the membrane. Residues 204–224 (FFIYIPNGIGTVLGVIQLVLY) traverse the membrane as a helical segment. The Cytoplasmic segment spans residues 225-243 (GYFRKGSREDSLPLLVTHT).

The protein belongs to the SWEET sugar transporter family. In terms of assembly, forms homooligomers and/or heterooligomers.

It is found in the cell membrane. Mediates both low-affinity uptake and efflux of sugar across the plasma membrane. The chain is Bidirectional sugar transporter SWEET2a (SWEET2A) from Oryza sativa subsp. indica (Rice).